The following is a 181-amino-acid chain: Respiratory supercomplex factor 1, mitochondrial (181 aa).

An HIG1 domain is found at 6-97; the sequence is LPSSMEDNPQ…TERQQRREFE (92 aa). Helical transmembrane passes span 33 to 49 and 69 to 86; these read PLIP…LYRA and IYAQ…GMYF. The segment at 136-160 is disordered; sequence AAKEAGKRPAPNKIPEQDAARSAIE.

This sequence belongs to the RCF1 family. In terms of assembly, associates with the respiratory chain complex III/complex IV supercomplex.

The protein resides in the mitochondrion membrane. Its function is as follows. Cytochrome c oxidase subunit which plays a role in assembly of respiratory supercomplexes. This Neosartorya fischeri (strain ATCC 1020 / DSM 3700 / CBS 544.65 / FGSC A1164 / JCM 1740 / NRRL 181 / WB 181) (Aspergillus fischerianus) protein is Respiratory supercomplex factor 1, mitochondrial (rcf1).